We begin with the raw amino-acid sequence, 356 residues long: Molybdenum import ATP-binding protein ModC (356 aa).

In terms of domain architecture, ABC transporter spans 1–232; it reads MEDIHARFHI…LDLPIRLGED (232 aa). 33–40 contributes to the ATP binding site; it reads GHSGSGKT. The 66-residue stretch at 291–356 folds into the Mop domain; that stretch reads ETSVLNLLRG…VQVKSVALME (66 aa).

It belongs to the ABC transporter superfamily. Molybdate importer (TC 3.A.1.8) family. The complex is composed of two ATP-binding proteins (ModC), two transmembrane proteins (ModB) and a solute-binding protein (ModA).

The protein localises to the cell inner membrane. The enzyme catalyses molybdate(out) + ATP + H2O = molybdate(in) + ADP + phosphate + H(+). In terms of biological role, part of the ABC transporter complex ModABC involved in molybdenum import. Responsible for energy coupling to the transport system. The protein is Molybdenum import ATP-binding protein ModC of Methylococcus capsulatus (strain ATCC 33009 / NCIMB 11132 / Bath).